Consider the following 358-residue polypeptide: Alanine racemase (358 aa).

Catalysis depends on lysine 34, which acts as the Proton acceptor; specific for D-alanine. An N6-(pyridoxal phosphate)lysine modification is found at lysine 34. Arginine 130 lines the substrate pocket. Tyrosine 254 functions as the Proton acceptor; specific for L-alanine in the catalytic mechanism. Methionine 302 serves as a coordination point for substrate.

Belongs to the alanine racemase family. It depends on pyridoxal 5'-phosphate as a cofactor.

It carries out the reaction L-alanine = D-alanine. The protein operates within amino-acid biosynthesis; D-alanine biosynthesis; D-alanine from L-alanine: step 1/1. Functionally, catalyzes the interconversion of L-alanine and D-alanine. May also act on other amino acids. The protein is Alanine racemase (alr) of Actinobacillus succinogenes (strain ATCC 55618 / DSM 22257 / CCUG 43843 / 130Z).